The following is a 573-amino-acid chain: MSRGLELLIAQTILQGFDAQYGRFLEVTSGAQQRFEHADWHAVQQAMKQRIHLYDHHVGLVVEQLRCITEGKSTDVDFLLRVKEHYTHLLPDYPRFEIAESFFNSVYCRLFDHRSLSPERLFIFSSQPARRFRAIPRPLAKDFFPEKGWEKALNNVLSDLPLRLPWQNKTRDVGYISAHLVETLGEETLRHSHLQVANELFFRNKAAWLVGKLITPDATLPFLLPIHRSDDGELFVDTCLTTSAEASIVFGFARSYFMVYAPFPAALVEWLREILPVKTTAELYMAIGCQKHAKTESYREYLYYITSTDEQFIEAPGIRGMVMLVFTLPGFDRVFKVIKDQFAPQKEMTAAHVRACYQLVKEHDRVGRMADTQEFENFVLDKRQIDPTLMALLLQEAPDKITDLGDKIAISHLYIERRMVPLNIWLEQVEGAQLRDAIEEYGNAIRQLAAANIFPGDMLFKNFGVTRHGRVVFYDYDEICYMTEVNFRTIPAARYPEDELASEPWYSVSPGDVFPEEFRHWLCADPRIGPLFEEMHDDLFRADYWRSLQTRIKEGHVEDVYAYRKRQRFCLRG.

Residues 315–321 (APGIRGM) and K336 contribute to the ATP site. D371 is an active-site residue.

This sequence belongs to the AceK family.

Its subcellular location is the cytoplasm. The catalysed reaction is L-seryl-[isocitrate dehydrogenase] + ATP = O-phospho-L-seryl-[isocitrate dehydrogenase] + ADP + H(+). In terms of biological role, bifunctional enzyme which can phosphorylate or dephosphorylate isocitrate dehydrogenase (IDH) on a specific serine residue. This is a regulatory mechanism which enables bacteria to bypass the Krebs cycle via the glyoxylate shunt in response to the source of carbon. When bacteria are grown on glucose, IDH is fully active and unphosphorylated, but when grown on acetate or ethanol, the activity of IDH declines drastically concomitant with its phosphorylation. The polypeptide is Isocitrate dehydrogenase kinase/phosphatase (Enterobacter sp. (strain 638)).